Reading from the N-terminus, the 102-residue chain is Small ubiquitin-related modifier 1 (102 aa).

The 78-residue stretch at Asp-21 to Gly-98 folds into the Ubiquitin-like domain. Gly-98 participates in a covalent cross-link: Glycyl lysine isopeptide (Gly-Lys) (interchain with K-? in acceptor proteins). The propeptide occupies His-99–Ile-102.

Belongs to the ubiquitin family. SUMO subfamily. In terms of assembly, interacts with sae2, ube2i, ranbp2, pias1 and pias2. Interacts with sox9 and sox10. Covalently attached to a number of proteins. Post-translationally, cleavage of precursor form by a sentrin-specific protease is necessary for function.

The protein resides in the nucleus membrane. It localises to the nucleus speckle. It is found in the cytoplasm. The protein localises to the nucleus. Its subcellular location is the PML body. The protein resides in the cell membrane. In terms of biological role, ubiquitin-like protein that can be covalently attached to proteins as a monomer or a lysine-linked polymer. Covalent attachment via an isopeptide bond to its substrates requires prior activation by the E1 complex sae1-sae2 and linkage to the E2 enzyme ube2i. This post-translational modification on lysine residues of proteins plays a crucial role in a number of cellular processes such as nuclear transport, DNA replication and repair, mitosis and signal transduction. Polymeric sumo1 chains are also susceptible to polyubiquitination which functions as a signal for proteasomal degradation of modified proteins. This chain is Small ubiquitin-related modifier 1 (sumo1), found in Xenopus tropicalis (Western clawed frog).